We begin with the raw amino-acid sequence, 409 residues long: Elongation factor Tu, chloroplastic (409 aa).

A tr-type G domain is found at 10-214; sequence KPHVNIGTIG…AVDAYIPTPE (205 aa). The G1 stretch occupies residues 19 to 26; it reads GHVDHGKT. 19–26 is a GTP binding site; that stretch reads GHVDHGKT. Threonine 26 is a Mg(2+) binding site. The interval 60–64 is G2; the sequence is GITIN. The tract at residues 81-84 is G3; the sequence is DCPG. GTP-binding positions include 81–85 and 136–139; these read DCPGH and NKQD. The interval 136–139 is G4; the sequence is NKQD. Residues 174–176 form a G5 region; the sequence is SAL.

It belongs to the TRAFAC class translation factor GTPase superfamily. Classic translation factor GTPase family. EF-Tu/EF-1A subfamily.

The protein localises to the plastid. Its subcellular location is the chloroplast. It carries out the reaction GTP + H2O = GDP + phosphate + H(+). GTP hydrolase that promotes the GTP-dependent binding of aminoacyl-tRNA to the A-site of ribosomes during protein biosynthesis. This Thalassiosira pseudonana (Marine diatom) protein is Elongation factor Tu, chloroplastic (tufA).